A 450-amino-acid chain; its full sequence is MMKANKIIKLFKGTVIHSIEIGKVEILPNSLIGIDEDGVIQHMKSNYEDLKQLEKDVTMICTDNGINEQESVIDMGNKFLIPGFIDTHAHAPQYHNAGTGTDLPLLKWLEKYTFPVESKFKDLIFAENVYGKVVDRMLRHGTTTCCYYATIHLEASELLAEIVSKRGQRAFIGKVCMDRHSPDHYVETTEQSISNTKEFVDRILAKGNPLVQPIVTPRFAPSCTDELMVALGNLSHEKQTLIQSHLSENKDEIEWVKSLYPGIESYTHVYKHFNLLNERTIMAHCVHLSDEEIKLISTQQTAISHCPISNFTLSSGNLDVRKVLEANIKLGLGSDISGGYHPSILQVIRDSIKCSNSHFFNNGNHTPLTFEEAFYLATVGGSKVVNLDHRIGNFIVGKDFDAQIIDPFVQNSPFDCFDGETLKDIFQKFIYLGDDRNLSSLYIKGNKIKF.

Zn(2+) is bound by residues His-88 and His-90. Residues 90–93 (HAPQ), 218–219 (RF), 245–248 (HLSE), and Asp-335 each bind substrate. Positions 245 and 335 each coordinate Zn(2+).

The protein belongs to the metallo-dependent hydrolases superfamily. ATZ/TRZ family. Requires Zn(2+) as cofactor.

It catalyses the reaction guanine + H2O + H(+) = xanthine + NH4(+). It functions in the pathway purine metabolism; guanine degradation; xanthine from guanine: step 1/1. Catalyzes the hydrolytic deamination of guanine, producing xanthine and ammonia. This chain is Guanine deaminase (guaD), found in Dictyostelium discoideum (Social amoeba).